Reading from the N-terminus, the 623-residue chain is tRNA uridine 5-carboxymethylaminomethyl modification enzyme MnmG (623 aa).

Gly-12–Gly-17 serves as a coordination point for FAD. Gly-272 to Phe-286 lines the NAD(+) pocket.

This sequence belongs to the MnmG family. In terms of assembly, homodimer. Heterotetramer of two MnmE and two MnmG subunits. FAD is required as a cofactor.

Its subcellular location is the cytoplasm. In terms of biological role, NAD-binding protein involved in the addition of a carboxymethylaminomethyl (cmnm) group at the wobble position (U34) of certain tRNAs, forming tRNA-cmnm(5)s(2)U34. This Flavobacterium johnsoniae (strain ATCC 17061 / DSM 2064 / JCM 8514 / BCRC 14874 / CCUG 350202 / NBRC 14942 / NCIMB 11054 / UW101) (Cytophaga johnsonae) protein is tRNA uridine 5-carboxymethylaminomethyl modification enzyme MnmG.